A 264-amino-acid polypeptide reads, in one-letter code: Acyl-[acyl-carrier-protein]--UDP-N-acetylglucosamine O-acyltransferase (264 aa).

It belongs to the transferase hexapeptide repeat family. LpxA subfamily. In terms of assembly, homotrimer.

It is found in the cytoplasm. The catalysed reaction is a (3R)-hydroxyacyl-[ACP] + UDP-N-acetyl-alpha-D-glucosamine = a UDP-3-O-[(3R)-3-hydroxyacyl]-N-acetyl-alpha-D-glucosamine + holo-[ACP]. The protein operates within glycolipid biosynthesis; lipid IV(A) biosynthesis; lipid IV(A) from (3R)-3-hydroxytetradecanoyl-[acyl-carrier-protein] and UDP-N-acetyl-alpha-D-glucosamine: step 1/6. Functionally, involved in the biosynthesis of lipid A, a phosphorylated glycolipid that anchors the lipopolysaccharide to the outer membrane of the cell. The sequence is that of Acyl-[acyl-carrier-protein]--UDP-N-acetylglucosamine O-acyltransferase from Chlorobaculum parvum (strain DSM 263 / NCIMB 8327) (Chlorobium vibrioforme subsp. thiosulfatophilum).